Consider the following 137-residue polypeptide: MGVRKRETADARKEANKSIAFAKLNNCPTSPRKMRLVADLVRGQKVDRALNILRFSSKEASRKLEKLVLSVIANWQAKNPEANMEEAGLFIKTITVDGGMMLKRLRPAPQGRAHRIRKRSNHVTIVLGSINNTQAIN.

This sequence belongs to the universal ribosomal protein uL22 family. In terms of assembly, part of the 50S ribosomal subunit.

This protein binds specifically to 23S rRNA; its binding is stimulated by other ribosomal proteins, e.g. L4, L17, and L20. It is important during the early stages of 50S assembly. It makes multiple contacts with different domains of the 23S rRNA in the assembled 50S subunit and ribosome. Functionally, the globular domain of the protein is located near the polypeptide exit tunnel on the outside of the subunit, while an extended beta-hairpin is found that lines the wall of the exit tunnel in the center of the 70S ribosome. This chain is Large ribosomal subunit protein uL22, found in Flavobacterium psychrophilum (strain ATCC 49511 / DSM 21280 / CIP 103535 / JIP02/86).